The chain runs to 476 residues: Glutamate--tRNA ligase (476 aa).

Residues 9-19 (PSPTGTLHLGT) carry the 'HIGH' region motif. Positions 248–252 (KLSKR) match the 'KMSKS' region motif. Lys251 lines the ATP pocket.

This sequence belongs to the class-I aminoacyl-tRNA synthetase family. Glutamate--tRNA ligase type 1 subfamily. As to quaternary structure, monomer.

It localises to the cytoplasm. It catalyses the reaction tRNA(Glu) + L-glutamate + ATP = L-glutamyl-tRNA(Glu) + AMP + diphosphate. Functionally, catalyzes the attachment of glutamate to tRNA(Glu) in a two-step reaction: glutamate is first activated by ATP to form Glu-AMP and then transferred to the acceptor end of tRNA(Glu). The polypeptide is Glutamate--tRNA ligase (Prochlorococcus marinus (strain NATL2A)).